The chain runs to 164 residues: Peptide deformylase (164 aa).

Positions 87 and 129 each coordinate Fe cation. The active site involves glutamate 130. Histidine 133 serves as a coordination point for Fe cation.

The protein belongs to the polypeptide deformylase family. The cofactor is Fe(2+).

The catalysed reaction is N-terminal N-formyl-L-methionyl-[peptide] + H2O = N-terminal L-methionyl-[peptide] + formate. In terms of biological role, removes the formyl group from the N-terminal Met of newly synthesized proteins. Requires at least a dipeptide for an efficient rate of reaction. N-terminal L-methionine is a prerequisite for activity but the enzyme has broad specificity at other positions. The protein is Peptide deformylase of Thermotoga sp. (strain RQ2).